A 368-amino-acid polypeptide reads, in one-letter code: Histidinol-phosphate aminotransferase (368 aa).

An N6-(pyridoxal phosphate)lysine modification is found at Lys-223.

It belongs to the class-II pyridoxal-phosphate-dependent aminotransferase family. Histidinol-phosphate aminotransferase subfamily. Homodimer. It depends on pyridoxal 5'-phosphate as a cofactor.

It carries out the reaction L-histidinol phosphate + 2-oxoglutarate = 3-(imidazol-4-yl)-2-oxopropyl phosphate + L-glutamate. The protein operates within amino-acid biosynthesis; L-histidine biosynthesis; L-histidine from 5-phospho-alpha-D-ribose 1-diphosphate: step 7/9. This Rhodospirillum rubrum (strain ATCC 11170 / ATH 1.1.1 / DSM 467 / LMG 4362 / NCIMB 8255 / S1) protein is Histidinol-phosphate aminotransferase.